The primary structure comprises 100 residues: Large ribosomal subunit protein uL23 (100 aa).

It belongs to the universal ribosomal protein uL23 family. In terms of assembly, part of the 50S ribosomal subunit. Contacts protein L29, and trigger factor when it is bound to the ribosome.

In terms of biological role, one of the early assembly proteins it binds 23S rRNA. One of the proteins that surrounds the polypeptide exit tunnel on the outside of the ribosome. Forms the main docking site for trigger factor binding to the ribosome. The polypeptide is Large ribosomal subunit protein uL23 (Shewanella pealeana (strain ATCC 700345 / ANG-SQ1)).